Reading from the N-terminus, the 382-residue chain is Ubiquitin-like protease 4 (382 aa).

The interval 46-106 (GTHLDGSIGE…DNDEWTNQKR (61 aa)) is disordered. Residues 84-100 (DLVDEDEEEEDEEDNDE) show a composition bias toward acidic residues.

The protein belongs to the peptidase C48 family. As to expression, expressed in hermaphrodite-specific neurons, head muscles, body wall muscles and pharyngeal cells.

The protein localises to the cytoplasm. It is found in the cytoskeleton. The protein resides in the microtubule organizing center. It localises to the centrosome. Its subcellular location is the nucleus. The protein localises to the mitochondrion matrix. It functions in the pathway protein modification; protein sumoylation. Its function is as follows. Protease required for deconjugation of smo-1 conjugates from target proteins which is necessary for cell cycle progression. Required for respiration and the maintenance of normal mitochondrial homeostasis. In response to mitochondrial stress, required for the removal of smo-1 conjugates from the transcription factor dve-1, which promotes the translocation of dve-1 from the cytosol to the nucleus to initiate the mitochondrial unfolded protein response. Furthermore, removes the smo-1 conjugates from the transcription factor atfs-1 to promote its stability and activate the mitochondrial unfolded protein response. Also plays a role in promoting mitochondrial unfolded protein response-mediated innate immunity following infection with P.aeruginosa. The protein is Ubiquitin-like protease 4 of Caenorhabditis elegans.